Consider the following 1166-residue polypeptide: Serine-aspartate repeat-containing protein E (1166 aa).

The signal sequence occupies residues 1–52 (MINRDNKKAITKKGMISNRLNKFSIRKYTVGTASILVGTTLIFGLGNQEAKA). The YSIRK-G/S signaling motif motif lies at 23 to 34 (FSIRKYTVGTAS). Positions 53–606 (AENTSTENAK…GDGTVKPEEK (554 aa)) are ligand binding A region. Residues 54-230 (ENTSTENAKQ…SKEELKNNPE (177 aa)) form a disordered region. Positions 61–75 (AKQDDATTSDNKEVV) are enriched in basic and acidic residues. Residues 77 to 90 (ETENNSTTENNSTN) are compositionally biased toward low complexity. Residues 92 to 108 (IKKETNTDSQPEAKKES) are compositionally biased toward basic and acidic residues. The span at 118–129 (NNVTATTETKPQ) shows a compositional bias: polar residues. A compositionally biased stretch (basic and acidic residues) spans 130–145 (NIEKENVKPSTDKTAT). Positions 166–178 (TTKPSTSEPSTSE) are enriched in low complexity. Residues 179 to 212 (IQTKPTTPQESTNIENSQPQPTPSKVDNQVTDAT) are compositionally biased toward polar residues. The span at 221 to 230 (SKEELKNNPE) shows a compositional bias: basic and acidic residues. CNA-B domains lie at 607–719 (LYKI…YKEP), 720–829 (KYNL…YKTP), and 830–940 (KYSL…EEDT). Residues 904-1141 (VTNTTEDDKD…TGSENNGSNN (238 aa)) form a disordered region. Acidic residues-rich tracts occupy residues 908–918 (TEDDKDADGGE) and 935–1105 (YFEE…DSDS). The LPXTG sorting signal motif lies at 1129-1133 (LPETG). At Thr1132 the chain carries Pentaglycyl murein peptidoglycan amidated threonine. The propeptide at 1133 to 1166 (GSENNGSNNATLFGGLFAALGSLLLFGRRKKQNK) is removed by sortase.

It belongs to the serine-aspartate repeat-containing protein (SDr) family. Interacts with host complement factor H/CFAH (via C-terminus). Interacts with host complement regulator C4BPA.

It is found in the secreted. The protein resides in the cell wall. Functionally, cell surface-associated calcium-binding protein which plays an important role in adhesion and pathogenesis. Contributes to the resistance to killing by innate immune components in blood and thus attenuates bacterial clearance by interacting with host complement factor H/CFAH and modulating its activity. Inhibits also bacterial opsonization and killing by interacting with host complement regulator C4BPA and thus inhibiting classical complement pathway activation. This Staphylococcus aureus (strain Newman) protein is Serine-aspartate repeat-containing protein E (sdrE).